A 274-amino-acid chain; its full sequence is Diaminopimelate epimerase (274 aa).

The substrate site is built by N11, Q44, and N64. Residue C73 is the Proton donor of the active site. Residues 74–75 (GN), N157, N190, and 208–209 (ER) contribute to the substrate site. Residue C217 is the Proton acceptor of the active site. 218-219 (GS) lines the substrate pocket.

It belongs to the diaminopimelate epimerase family. In terms of assembly, homodimer.

It is found in the cytoplasm. It carries out the reaction (2S,6S)-2,6-diaminopimelate = meso-2,6-diaminopimelate. Its pathway is amino-acid biosynthesis; L-lysine biosynthesis via DAP pathway; DL-2,6-diaminopimelate from LL-2,6-diaminopimelate: step 1/1. Functionally, catalyzes the stereoinversion of LL-2,6-diaminopimelate (L,L-DAP) to meso-diaminopimelate (meso-DAP), a precursor of L-lysine and an essential component of the bacterial peptidoglycan. This chain is Diaminopimelate epimerase, found in Haemophilus influenzae (strain PittGG).